Consider the following 443-residue polypeptide: ATP-dependent protease ATPase subunit HslU (443 aa).

Residues I20, 62-67, D255, E321, and R393 each bind ATP; that span reads GVGKTE.

Belongs to the ClpX chaperone family. HslU subfamily. A double ring-shaped homohexamer of HslV is capped on each side by a ring-shaped HslU homohexamer. The assembly of the HslU/HslV complex is dependent on binding of ATP.

The protein resides in the cytoplasm. Its function is as follows. ATPase subunit of a proteasome-like degradation complex; this subunit has chaperone activity. The binding of ATP and its subsequent hydrolysis by HslU are essential for unfolding of protein substrates subsequently hydrolyzed by HslV. HslU recognizes the N-terminal part of its protein substrates and unfolds these before they are guided to HslV for hydrolysis. In Helicobacter pylori (strain J99 / ATCC 700824) (Campylobacter pylori J99), this protein is ATP-dependent protease ATPase subunit HslU.